We begin with the raw amino-acid sequence, 349 residues long: Isopentenyl-diphosphate delta-isomerase (349 aa).

Arginine 12–lysine 13 contacts substrate. FMN-binding positions include serine 69, serine 70–threonine 72, serine 101, and asparagine 129. Serine 101–arginine 103 is a substrate binding site. A substrate-binding site is contributed by glutamine 164. Position 165 (glutamate 165) interacts with Mg(2+). Residues lysine 196, threonine 226, glycine 279–arginine 281, and alanine 300–alanine 301 contribute to the FMN site.

It belongs to the IPP isomerase type 2 family. Homooctamer. Dimer of tetramers. Requires FMN as cofactor. The cofactor is NADPH. It depends on Mg(2+) as a cofactor.

Its subcellular location is the cytoplasm. The catalysed reaction is isopentenyl diphosphate = dimethylallyl diphosphate. Involved in the biosynthesis of isoprenoids. Catalyzes the 1,3-allylic rearrangement of the homoallylic substrate isopentenyl (IPP) to its allylic isomer, dimethylallyl diphosphate (DMAPP). In Paracoccus zeaxanthinifaciens, this protein is Isopentenyl-diphosphate delta-isomerase.